Here is a 592-residue protein sequence, read N- to C-terminus: Bifunctional purine biosynthesis protein ADE17 (592 aa).

Positions 1–147 (MANYTKTAIL…KNHARVTILS (147 aa)) constitute an MGS-like domain. Residues 35–38 (SGGT), 65–68 (RVKT), 102–103 (CN), and 126–127 (DI) contribute to the IMP site. Lys138 functions as the Proton donor/acceptor; for FAICAR cyclization activity in the catalytic mechanism. 5-amino-1-(5-phospho-beta-D-ribosyl)imidazole-4-carboxamide contacts are provided by residues 206 to 207 (RY), His267, Gly315, Asp338, Asn430, and Arg450. Catalysis depends on His267, which acts as the Proton acceptor; for AICAR formyltransferase activity. Ile451 serves as a coordination point for (6R)-10-formyltetrahydrofolate. Phe541 contributes to the 5-amino-1-(5-phospho-beta-D-ribosyl)imidazole-4-carboxamide binding site. Residues Asp546 and 565–566 (SV) contribute to the (6R)-10-formyltetrahydrofolate site. Arg588 lines the 5-amino-1-(5-phospho-beta-D-ribosyl)imidazole-4-carboxamide pocket.

It belongs to the PurH family. In terms of assembly, homodimer.

It is found in the cytoplasm. Its subcellular location is the cytosol. It catalyses the reaction (6R)-10-formyltetrahydrofolate + 5-amino-1-(5-phospho-beta-D-ribosyl)imidazole-4-carboxamide = 5-formamido-1-(5-phospho-D-ribosyl)imidazole-4-carboxamide + (6S)-5,6,7,8-tetrahydrofolate. It carries out the reaction IMP + H2O = 5-formamido-1-(5-phospho-D-ribosyl)imidazole-4-carboxamide. It participates in purine metabolism; IMP biosynthesis via de novo pathway; 5-formamido-1-(5-phospho-D-ribosyl)imidazole-4-carboxamide from 5-amino-1-(5-phospho-D-ribosyl)imidazole-4-carboxamide (10-formyl THF route): step 1/1. It functions in the pathway purine metabolism; IMP biosynthesis via de novo pathway; IMP from 5-formamido-1-(5-phospho-D-ribosyl)imidazole-4-carboxamide: step 1/1. Bifunctional enzyme that catalyzes the last two steps of purine biosynthesis. Acts as a transformylase that incorporates a formyl group to the AMP analog AICAR (5-amino-1-(5-phospho-beta-D-ribosyl)imidazole-4-carboxamide) to produce the intermediate formyl-AICAR (FAICAR). Also catalyzes the cyclization of FAICAR to IMP. The chain is Bifunctional purine biosynthesis protein ADE17 from Saccharomyces cerevisiae (strain ATCC 204508 / S288c) (Baker's yeast).